Reading from the N-terminus, the 1033-residue chain is Immunoglobulin superfamily member 2 (1033 aa).

The first 20 residues, 1–20 (MACILCVASLFLSLTKFSIG), serve as a signal peptide directing secretion. The Extracellular portion of the chain corresponds to 21–970 (QREVKIQEGP…VSSLICSSGP (950 aa)). 7 Ig-like C2-type domains span residues 22–141 (REVK…TNLT), 144–266 (PDTL…TLIT), 279–388 (PAAR…TQMG), 408–529 (PAAR…QKIS), 539–657 (LRVN…ARVS), 670–797 (PESK…RKTS), and 806–941 (PTGS…KWIN). A disulfide bridge links C43 with C121. N139 carries an N-linked (GlcNAc...) asparagine glycan. An intrachain disulfide couples C168 to C249. An EWI motif motif is present at residues 253-255 (EWI). 3 disulfide bridges follow: C304-C377, C432-C509, and C560-C638. N677 carries an N-linked (GlcNAc...) asparagine glycan. 2 cysteine pairs are disulfide-bonded: C695–C776 and C832–C925. A helical transmembrane segment spans residues 971–991 (LLHFLIVCPFVMLLLLATSFL). The Cytoplasmic segment spans residues 992–1033 (CLYRKARKLSQLSLSAKKEKALWVGMRKTSLQKEAGEESGHY).

Post-translationally, N-glycosylated.

It localises to the membrane. Functionally, plays a role as inhibitor of T-cells proliferation induced by CD3. Inhibits expression of IL2RA on activated T-cells and secretion of IL2. Inhibits tyrosine kinases that are required for IL2 production and cellular proliferation. Inhibits phospholipase C-gamma-1/PLCG1 phosphorylation and subsequent CD3-induced changes in intracellular free calcium. Prevents nuclear translocation of nuclear factor of activated T-cell to the nucleus. Plays a role in the inhibition of T-cell proliferation via IL10 secretion by cutaneous dendritic cells. This Mus musculus (Mouse) protein is Immunoglobulin superfamily member 2 (Cd101).